A 610-amino-acid chain; its full sequence is Elongation factor 4 (610 aa).

One can recognise a tr-type G domain in the interval 11–193 (EKIRNFSIIA…QIVEKVPAPT (183 aa)). Residues 23-28 (DHGKST) and 140-143 (NKID) each bind GTP.

The protein belongs to the TRAFAC class translation factor GTPase superfamily. Classic translation factor GTPase family. LepA subfamily.

It localises to the cell membrane. The catalysed reaction is GTP + H2O = GDP + phosphate + H(+). Its function is as follows. Required for accurate and efficient protein synthesis under certain stress conditions. May act as a fidelity factor of the translation reaction, by catalyzing a one-codon backward translocation of tRNAs on improperly translocated ribosomes. Back-translocation proceeds from a post-translocation (POST) complex to a pre-translocation (PRE) complex, thus giving elongation factor G a second chance to translocate the tRNAs correctly. Binds to ribosomes in a GTP-dependent manner. This Streptococcus pyogenes serotype M3 (strain ATCC BAA-595 / MGAS315) protein is Elongation factor 4.